The sequence spans 279 residues: DegV domain-containing protein SA1258 (279 aa).

In terms of domain architecture, DegV spans 4–278 (QIIVTDSTSD…QGAIGLVVLK (275 aa)). Hexadecanoate is bound by residues threonine 61 and serine 93.

Functionally, may bind long-chain fatty acids, such as palmitate, and may play a role in lipid transport or fatty acid metabolism. This chain is DegV domain-containing protein SA1258, found in Staphylococcus aureus (strain N315).